Here is a 54-residue protein sequence, read N- to C-terminus: Sec-independent protein translocase protein TatA (54 aa).

Residues 1-21 (MGMSFSHLLIVLLIIFVLFGA) traverse the membrane as a helical segment.

The protein belongs to the TatA/E family. In terms of assembly, the Tat system comprises two distinct complexes: a TatABC complex, containing multiple copies of TatA, TatB and TatC subunits, and a separate TatA complex, containing only TatA subunits. Substrates initially bind to the TatABC complex, which probably triggers association of the separate TatA complex to form the active translocon.

It localises to the cell inner membrane. Part of the twin-arginine translocation (Tat) system that transports large folded proteins containing a characteristic twin-arginine motif in their signal peptide across membranes. TatA could form the protein-conducting channel of the Tat system. The sequence is that of Sec-independent protein translocase protein TatA from Rickettsia prowazekii (strain Madrid E).